The sequence spans 362 residues: E3 ubiquitin-protein ligase TM129 (362 aa).

Residues 1 to 6 (MESPEV) lie on the Lumenal side of the membrane. A helical transmembrane segment spans residues 7–27 (TFTLAYVVFSVCFVFTPNEFH). The Cytoplasmic segment spans residues 28-56 (SAGITVQNLLSGWLGSEDVAFVHYHIRRS). Residues 57–77 (TATLLTHSLLPMGYFIGMCFA) traverse the membrane as a helical segment. Residues 78–94 (APEKELYNVYKAADGWK) lie on the Lumenal side of the membrane. The chain crosses the membrane as a helical span at residues 95–115 (VFVLITVLLPVTTSILAFYWS). The Cytoplasmic portion of the chain corresponds to 116 to 362 (QKRWGNHPLA…FCIVDVCIVR (247 aa)). An RING-type; degenerate zinc finger spans residues 285 to 350 (CIGCMQTNAN…SSHVPCPTCR (66 aa)).

It belongs to the TMEM129 family. Integral component of ER-resident dislocation complexes.

The protein localises to the endoplasmic reticulum membrane. It catalyses the reaction S-ubiquitinyl-[E2 ubiquitin-conjugating enzyme]-L-cysteine + [acceptor protein]-L-lysine = [E2 ubiquitin-conjugating enzyme]-L-cysteine + N(6)-ubiquitinyl-[acceptor protein]-L-lysine.. Its pathway is protein modification; protein ubiquitination. Its function is as follows. E3 ubiquitin-protein ligase involved in ER-associated protein degradation, preferentially associates with the E2 enzyme UBE2J2. The polypeptide is E3 ubiquitin-protein ligase TM129 (tmem129) (Xenopus tropicalis (Western clawed frog)).